The following is a 159-amino-acid chain: SsrA-binding protein (159 aa).

Belongs to the SmpB family.

It is found in the cytoplasm. Its function is as follows. Required for rescue of stalled ribosomes mediated by trans-translation. Binds to transfer-messenger RNA (tmRNA), required for stable association of tmRNA with ribosomes. tmRNA and SmpB together mimic tRNA shape, replacing the anticodon stem-loop with SmpB. tmRNA is encoded by the ssrA gene; the 2 termini fold to resemble tRNA(Ala) and it encodes a 'tag peptide', a short internal open reading frame. During trans-translation Ala-aminoacylated tmRNA acts like a tRNA, entering the A-site of stalled ribosomes, displacing the stalled mRNA. The ribosome then switches to translate the ORF on the tmRNA; the nascent peptide is terminated with the 'tag peptide' encoded by the tmRNA and targeted for degradation. The ribosome is freed to recommence translation, which seems to be the essential function of trans-translation. The polypeptide is SsrA-binding protein (Actinobacillus pleuropneumoniae serotype 5b (strain L20)).